We begin with the raw amino-acid sequence, 419 residues long: DNA ligase (419 aa).

Residues 1–120 are NTD; it reads MLSQFPGQCS…ARQKRGAHTN (120 aa). The AD domain stretch occupies residues 121–317; the sequence is RGMIPPMLVK…NYHSPHLAKL (197 aa). Residues H149, K151, E203, and F232 each contribute to the ATP site. K151 (N6-AMP-lysine intermediate) is an active-site residue. E203 contributes to the a divalent metal cation binding site. An a divalent metal cation-binding site is contributed by E291. Positions 294 and 316 each coordinate ATP. The tract at residues 318–419 is OB domain; sequence KPLLDAEFIL…REPINVLEII (102 aa).

Belongs to the ATP-dependent DNA ligase family. Requires a divalent metal cation as cofactor.

Its subcellular location is the virion. It catalyses the reaction ATP + (deoxyribonucleotide)n-3'-hydroxyl + 5'-phospho-(deoxyribonucleotide)m = (deoxyribonucleotide)n+m + AMP + diphosphate.. Functionally, very low-fidelity DNA ligase that seals nicks in double-stranded DNA during DNA repair. Together with the viral repair DNA polymerase X, fills the single nucleotide gaps generated by the AP endonuclease. It is not essential for viral replication and recombination. Displays a very low adenylation activity towards DNA with 3'-dideoxy- or 3'-amino-terminated nicks compared to regular nick DNA. This is DNA ligase (LIG) from Ornithodoros (relapsing fever ticks).